The primary structure comprises 289 residues: Dihydropteroate synthase (289 aa).

The region spanning 28-282 (TYVMGILNTT…DVEAMAQICK (255 aa)) is the Pterin-binding domain. N35 is a Mg(2+) binding site. (7,8-dihydropterin-6-yl)methyl diphosphate-binding positions include T75, D109, N128, D199, K235, and 270-272 (RVH).

It belongs to the DHPS family. It depends on Mg(2+) as a cofactor.

The catalysed reaction is (7,8-dihydropterin-6-yl)methyl diphosphate + 4-aminobenzoate = 7,8-dihydropteroate + diphosphate. Its pathway is cofactor biosynthesis; tetrahydrofolate biosynthesis; 7,8-dihydrofolate from 2-amino-4-hydroxy-6-hydroxymethyl-7,8-dihydropteridine diphosphate and 4-aminobenzoate: step 1/2. Functionally, catalyzes the condensation of para-aminobenzoate (pABA) with 6-hydroxymethyl-7,8-dihydropterin diphosphate (DHPt-PP) to form 7,8-dihydropteroate (H2Pte), the immediate precursor of folate derivatives. The chain is Dihydropteroate synthase (folP) from Synechocystis sp. (strain ATCC 27184 / PCC 6803 / Kazusa).